The sequence spans 645 residues: Sodium-dependent phosphate transporter 2 (645 aa).

Over M1–E5 the chain is Extracellular. A helical membrane pass occupies residues Y6–A26. Topologically, residues N27–Q46 are cytoplasmic. A helical membrane pass occupies residues A47–G67. Over E68–T86 the chain is Extracellular. N81 carries an N-linked (GlcNAc...) asparagine glycan. Residues L87–F107 traverse the membrane as a helical segment. Residues L108–R109 are Cytoplasmic-facing. The helical transmembrane segment at F110–I130 threads the bilayer. The Extracellular segment spans residues G131–K142. A helical membrane pass occupies residues I143–V163. The Cytoplasmic portion of the chain corresponds to L164–T190. The chain crosses the membrane as a helical span at residues I191–P211. Over M212–W213 the chain is Extracellular. A helical membrane pass occupies residues A214 to V234. Over C235–E475 the chain is Cytoplasmic. Phosphoserine is present on residues S253, S256, S259, S268, S316, and S379. The segment at P275 to G320 is disordered. A disordered region spans residues R448–K471. The helical transmembrane segment at V476–G496 threads the bilayer. Residues G497 to A523 lie on the Extracellular side of the membrane. The helical transmembrane segment at A524 to W544 threads the bilayer. The Cytoplasmic segment spans residues G545–G564. Residues F565–S579 form a helical membrane-spanning segment. Over N580 to S586 the chain is Extracellular. Residues T587 to R602 form a helical membrane-spanning segment. Topologically, residues S603–N614 are cytoplasmic. Residues I615–A635 form a helical membrane-spanning segment. Topologically, residues L636–V645 are extracellular.

The protein belongs to the inorganic phosphate transporter (PiT) (TC 2.A.20) family. In terms of assembly, homodimer.

Its subcellular location is the cell membrane. It is found in the apical cell membrane. The catalysed reaction is 2 Na(+)(out) + phosphate(out) = 2 Na(+)(in) + phosphate(in). In terms of biological role, sodium-phosphate symporter which preferentially transports the monovalent form of phosphate with a stoichiometry of two sodium ions per phosphate ion. Plays a critical role in the determination of bone quality and strength by providing phosphate for bone mineralization. Required to maintain normal cerebrospinal fluid phosphate levels. Mediates phosphate-induced calcification of vascular smooth muscle cells (VCMCs) and can functionally compensate for loss of SLC20A1 in VCMCs. In Bos taurus (Bovine), this protein is Sodium-dependent phosphate transporter 2 (SLC20A2).